Consider the following 75-residue polypeptide: Calhepatin (75 aa).

Ser-1 is subject to N-acetylserine. 2 EF-hand domains span residues Ala-2–Lys-37 and Val-38–Leu-73. Asp-15, Asp-17, Ser-19, Thr-21, Glu-26, Asp-51, Asn-53, Asp-55, Gln-57, and Glu-62 together coordinate Ca(2+).

In terms of assembly, monomer and homodimer. In terms of tissue distribution, liver, and to a much lower level intestine.

In terms of biological role, binds both calcium and copper, but not zinc. May be involved in calcium signal transduction. This is Calhepatin from Lepidosiren paradoxus (South American lungfish).